A 311-amino-acid chain; its full sequence is GTP cyclohydrolase FolE2 (311 aa).

It belongs to the GTP cyclohydrolase IV family.

The catalysed reaction is GTP + H2O = 7,8-dihydroneopterin 3'-triphosphate + formate + H(+). It participates in cofactor biosynthesis; 7,8-dihydroneopterin triphosphate biosynthesis; 7,8-dihydroneopterin triphosphate from GTP: step 1/1. In terms of biological role, converts GTP to 7,8-dihydroneopterin triphosphate. This is GTP cyclohydrolase FolE2 from Xanthomonas campestris pv. campestris (strain B100).